Reading from the N-terminus, the 1697-residue chain is Histone acetyltransferase HAC1 (1697 aa).

Over residues 1 to 16 the composition is skewed to polar residues; sequence MNVQAHMSGQVSNQGT. Disordered stretches follow at residues 1 to 45, 202 to 221, 385 to 439, 555 to 574, 583 to 631, and 843 to 901; these read MNVQ…LGPS, SNFG…QRNT, SFQA…QQQR, HWQS…SNER, RMSG…GNRD, and IGIA…GKPE. 2 stretches are compositionally biased toward low complexity: residues 17–28 and 202–217; these read MSQQNGNSQMQN and SNFG…SMSS. Residues 385–398 show a composition bias toward polar residues; the sequence is SFQAVSRTSSSLSH. A compositionally biased stretch (low complexity) spans 399–439; it reads QQQQFQQQPNRFQQQPNQFHQQQQQFLHQQQLKQQSQQQQR. 2 stretches are compositionally biased toward polar residues: residues 556–571 and 584–628; these read WQSQ…NSMS and MSGT…NGNG. A TAZ-type 1 zinc finger spans residues 629-709; it reads NRDPRFKNQQ…EPNCPVCIPV (81 aa). The segment covering 873–901 has biased composition (basic and acidic residues); sequence TKVEKEPESLKKENLAESTEHTSKSGKPE. The PHD-type zinc-finger motif lies at 989 to 1066; the sequence is HYFCIPCYNE…EYTCPYCFIA (78 aa). One can recognise a CBP/p300-type HAT domain in the interval 1081–1517; sequence VLGAKDLPRT…VLYHLHNPTA (437 aa). Residues 1204 to 1206, 1223 to 1224, and W1279 contribute to the acetyl-CoA site; these read LDS and RT. 2 consecutive ZZ-type zinc fingers follow at residues 1399–1462 and 1519–1572; these read HLQP…IMDI and AFVT…SLAD. Positions 1404, 1407, 1419, 1422, 1428, 1431, 1444, 1452, 1524, 1527, 1539, 1542, 1548, 1551, 1560, and 1562 each coordinate Zn(2+). A TAZ-type 2 zinc finger spans residues 1579-1662; the sequence is EARQLRVLQL…ECHVPRCRDL (84 aa).

As to expression, rosette leaves, stems and flowers.

Its subcellular location is the nucleus. It carries out the reaction L-lysyl-[protein] + acetyl-CoA = N(6)-acetyl-L-lysyl-[protein] + CoA + H(+). Its function is as follows. Acetyltransferase enzyme. Acetylates histones, giving a specific tag for transcriptional activation. The sequence is that of Histone acetyltransferase HAC1 (HAC1) from Arabidopsis thaliana (Mouse-ear cress).